The chain runs to 552 residues: 5'-AMP-activated protein kinase catalytic subunit alpha-2 (552 aa).

The Protein kinase domain maps to 16–268; it reads YVLGDTLGVG…IKDIREHEWF (253 aa). ATP contacts are provided by residues 22–30 and lysine 45; that span reads LGVGTFGKV. Aspartate 139 acts as the Proton acceptor in catalysis. A Phosphothreonine; by LKB1 and CaMKK2 modification is found at threonine 172. Position 258 is a phosphothreonine (threonine 258). The segment at 291 to 376 is AIS; sequence EAVKEVCEKF…PERMPPLIAD (86 aa). Residue serine 377 is modified to Phosphoserine. Residues 477 to 521 form a disordered region; it reads VEQRSGSSTPQRSCSAAGLHRPRSSFDSTTAESHSLSGSLTGSLT. Polar residues predominate over residues 480–490; sequence RSGSSTPQRSC. Serine 491 bears the Phosphoserine mark. The span at 501-510 shows a compositional bias: polar residues; the sequence is SFDSTTAESH. Residues 511 to 521 are compositionally biased toward low complexity; the sequence is SLSGSLTGSLT.

Belongs to the protein kinase superfamily. CAMK Ser/Thr protein kinase family. SNF1 subfamily. AMPK is a heterotrimer of an alpha catalytic subunit (PRKAA1 or PRKAA2), a beta (PRKAB1 or PRKAB2) and a gamma non-catalytic subunits (PRKAG1, PRKAG2 or PRKAG3). Interacts with FNIP1 and FNIP2. Interacts with DUSP29. Interacts with ARF6. The phosphorylated form at Thr-172 mediated by CamKK2 interacts with ACSS2. Mg(2+) is required as a cofactor. Post-translationally, ubiquitinated. Phosphorylated at Thr-172 by STK11/LKB1 in complex with STE20-related adapter-alpha (STRADA) pseudo kinase and CAB39. Also phosphorylated at Thr-172 by CAMKK2; triggered by a rise in intracellular calcium ions, without detectable changes in the AMP/ATP ratio. CAMKK1 can also phosphorylate Thr-172, but at much lower level. Dephosphorylated by protein phosphatase 2A and 2C (PP2A and PP2C). Phosphorylated by ULK1; leading to negatively regulate AMPK activity and suggesting the existence of a regulatory feedback loop between ULK1 and AMPK. Dephosphorylated by PPM1A and PPM1B at Thr-172 (mediated by STK11/LKB1).

Its subcellular location is the cytoplasm. It is found in the nucleus. It catalyses the reaction L-seryl-[protein] + ATP = O-phospho-L-seryl-[protein] + ADP + H(+). The enzyme catalyses L-threonyl-[protein] + ATP = O-phospho-L-threonyl-[protein] + ADP + H(+). The catalysed reaction is L-seryl-[acetyl-CoA carboxylase] + ATP = O-phospho-L-seryl-[acetyl-CoA carboxylase] + ADP + H(+). It carries out the reaction L-seryl-[3-hydroxy-3-methylglutaryl-coenzyme A reductase] + ATP = O-phospho-L-seryl-[3-hydroxy-3-methylglutaryl-coenzyme A reductase] + ADP + H(+). Activated by phosphorylation on Thr-172. Binding of AMP to non-catalytic gamma subunit (PRKAG1, PRKAG2 or PRKAG3) results in allosteric activation, inducing phosphorylation on Thr-172. AMP-binding to gamma subunit also sustains activity by preventing dephosphorylation of Thr-172. ADP also stimulates Thr-172 phosphorylation, without stimulating already phosphorylated AMPK. ATP promotes dephosphorylation of Thr-172, rendering the enzyme inactive. Under physiological conditions AMPK mainly exists in its inactive form in complex with ATP, which is much more abundant than AMP. Selectively inhibited by compound C (6-[4-(2-Piperidin-1-yl-ethoxy)-phenyl)]-3-pyridin-4-yl-pyyrazolo[1,5-a] pyrimidine. Activated by resveratrol, a natural polyphenol present in red wine, and S17834, a synthetic polyphenol. Salicylate/aspirin directly activates kinase activity, primarily by inhibiting Thr-172 dephosphorylation. In terms of biological role, catalytic subunit of AMP-activated protein kinase (AMPK), an energy sensor protein kinase that plays a key role in regulating cellular energy metabolism. In response to reduction of intracellular ATP levels, AMPK activates energy-producing pathways and inhibits energy-consuming processes: inhibits protein, carbohydrate and lipid biosynthesis, as well as cell growth and proliferation. AMPK acts via direct phosphorylation of metabolic enzymes, and by longer-term effects via phosphorylation of transcription regulators. Regulates lipid synthesis by phosphorylating and inactivating lipid metabolic enzymes such as ACACA, ACACB, GYS1, HMGCR and LIPE; regulates fatty acid and cholesterol synthesis by phosphorylating acetyl-CoA carboxylase (ACACA and ACACB) and hormone-sensitive lipase (LIPE) enzymes, respectively. Promotes lipolysis of lipid droplets by mediating phosphorylation of isoform 1 of CHKA (CHKalpha2). Regulates insulin-signaling and glycolysis by phosphorylating IRS1, PFKFB2 and PFKFB3. Involved in insulin receptor/INSR internalization. AMPK stimulates glucose uptake in muscle by increasing the translocation of the glucose transporter SLC2A4/GLUT4 to the plasma membrane, possibly by mediating phosphorylation of TBC1D4/AS160. Regulates transcription and chromatin structure by phosphorylating transcription regulators involved in energy metabolism such as CRTC2/TORC2, FOXO3, histone H2B, HDAC5, MEF2C, MLXIPL/ChREBP, EP300, HNF4A, p53/TP53, SREBF1, SREBF2 and PPARGC1A. Acts as a key regulator of glucose homeostasis in liver by phosphorylating CRTC2/TORC2, leading to CRTC2/TORC2 sequestration in the cytoplasm. In response to stress, phosphorylates 'Ser-36' of histone H2B (H2BS36ph), leading to promote transcription. Acts as a key regulator of cell growth and proliferation by phosphorylating FNIP1, TSC2, RPTOR, WDR24 and ATG1/ULK1: in response to nutrient limitation, negatively regulates the mTORC1 complex by phosphorylating RPTOR component of the mTORC1 complex and by phosphorylating and activating TSC2. Also phosphorylates and inhibits GATOR2 subunit WDR24 in response to nutrient limitation, leading to suppress glucose-mediated mTORC1 activation. In response to energetic stress, phosphorylates FNIP1, inactivating the non-canonical mTORC1 signaling, thereby promoting nuclear translocation of TFEB and TFE3, and inducing transcription of lysosomal or autophagy genes. In response to nutrient limitation, promotes autophagy by phosphorylating and activating ATG1/ULK1. In that process also activates WDR45/WIPI4. Phosphorylates CASP6, thereby preventing its autoprocessing and subsequent activation. AMPK also acts as a regulator of circadian rhythm by mediating phosphorylation of CRY1, leading to destabilize it. May regulate the Wnt signaling pathway by phosphorylating CTNNB1, leading to stabilize it. Also acts as a regulator of cellular polarity by remodeling the actin cytoskeleton; probably by indirectly activating myosin. Also phosphorylates CFTR, EEF2K, KLC1, NOS3 and SLC12A1. Plays an important role in the differential regulation of pro-autophagy (composed of PIK3C3, BECN1, PIK3R4 and UVRAG or ATG14) and non-autophagy (composed of PIK3C3, BECN1 and PIK3R4) complexes, in response to glucose starvation. Can inhibit the non-autophagy complex by phosphorylating PIK3C3 and can activate the pro-autophagy complex by phosphorylating BECN1. Upon glucose starvation, promotes ARF6 activation in a kinase-independent manner leading to cell migration. Upon glucose deprivation mediates the phosphorylation of ACSS2 at 'Ser-659', which exposes the nuclear localization signal of ACSS2, required for its interaction with KPNA1 and nuclear translocation. Upon stress, regulates mitochondrial fragmentation through phosphorylation of MTFR1L. The chain is 5'-AMP-activated protein kinase catalytic subunit alpha-2 (PRKAA2) from Pongo abelii (Sumatran orangutan).